A 519-amino-acid polypeptide reads, in one-letter code: bZIP transcription factor 30 (519 aa).

Disordered stretches follow at residues 1-30 (MGGGGDTTDTNMMQRVNSSSGTSSSSIPKH), 45-83 (FRHPFTGAPPPPIPPISPYSQIPATLQPRHSRSMSQPSS), 108-202 (TGAG…RKPE), 222-295 (VLNS…TGRH), and 315-339 (SSLKLPPSSSAKVSPTNSGEGNSSA). Over residues 51-61 (GAPPPPIPPIS) the composition is skewed to pro residues. The segment covering 149-173 (SDVTFGFSSMMSQNQKSPPLSSLER) has biased composition (polar residues). Over residues 187–202 (VKKEPREGFYKGRKPE) the composition is skewed to basic and acidic residues. Low complexity-rich tracts occupy residues 244 to 268 (SRGSGTKKTNGGSSSDSEGDSSASG) and 317 to 329 (LKLPPSSSAKVSP). Residues 330-339 (TNSGEGNSSA) are compositionally biased toward polar residues. A basic motif region spans residues 372-393 (KRVKRILANRVSAARSKERKTR). Residues 386-460 (RSKERKTRYM…SEKLNEEVQR (75 aa)) are a coiled coil. Residues 398–433 (LEHKVQTLQTEATTLSAQLTHLQRDSMGLTNQNSEL) form a leucine-zipper region. Residues 465–519 (IGEPNRRQSGSSSSESKMSLNPEMFQQLSISQLQHQQMQHSNQCSTMKAKHTSND) are disordered. 2 stretches are compositionally biased toward low complexity: residues 473 to 483 (SGSSSSESKMS) and 490 to 509 (QQLSISQLQHQQMQHSNQCS).

Interacts with WUS, HEC1, KNAT1, KNAT2, HAT1, BEL1, and NGA1. In terms of tissue distribution, expressed in inflorescence meristem, floral organ primordia, gynoecia, ovules and carpel margin meristem.

It is found in the nucleus. Functionally, transcription factor that acts as a repressor of reproductive development, meristem size and plant growth. Acts as a transcriptional repressor in inflorescence tissues. Interacts with well known regulators of meristem and gynoecium development such as WUS, HEC1, KNAT1, KNAT2, HAT1, BEL1 and NGA1. Acts as a positive regulator of JAG and OFP1 expression in developing gynoecia. This Arabidopsis thaliana (Mouse-ear cress) protein is bZIP transcription factor 30.